Here is a 104-residue protein sequence, read N- to C-terminus: L-rhamnose mutarotase (104 aa).

Position 18 (Y18) interacts with substrate. H22 acts as the Proton donor in catalysis. Substrate-binding positions include Y41 and 76 to 77 (WW).

This sequence belongs to the rhamnose mutarotase family. In terms of assembly, homodimer.

The protein localises to the cytoplasm. It catalyses the reaction alpha-L-rhamnose = beta-L-rhamnose. It functions in the pathway carbohydrate metabolism; L-rhamnose metabolism. Involved in the anomeric conversion of L-rhamnose. The chain is L-rhamnose mutarotase from Escherichia coli O8 (strain IAI1).